Reading from the N-terminus, the 607-residue chain is UvrABC system protein C (607 aa).

The region spanning 15–93 is the GIY-YIG domain; that stretch reads SEPGVYCMLD…IKKYQPRYNI (79 aa). The region spanning 202–237 is the UVR domain; sequence HEVIADLIKKMEAASQQLNFELAAKVRDQIMLLRKM.

This sequence belongs to the UvrC family. In terms of assembly, interacts with UvrB in an incision complex.

It localises to the cytoplasm. Functionally, the UvrABC repair system catalyzes the recognition and processing of DNA lesions. UvrC both incises the 5' and 3' sides of the lesion. The N-terminal half is responsible for the 3' incision and the C-terminal half is responsible for the 5' incision. The chain is UvrABC system protein C from Pseudoalteromonas translucida (strain TAC 125).